The sequence spans 231 residues: 2,3-bisphosphoglycerate-dependent phosphoglycerate mutase (231 aa).

Residues Arg10–Asn17, Thr23–Gly24, Arg62, Glu89–Tyr92, Lys100, Arg116–Arg117, and Gly185–Asn186 contribute to the substrate site. His11 functions as the Tele-phosphohistidine intermediate in the catalytic mechanism. Glu89 (proton donor/acceptor) is an active-site residue.

The protein belongs to the phosphoglycerate mutase family. BPG-dependent PGAM subfamily. In terms of assembly, homodimer.

The enzyme catalyses (2R)-2-phosphoglycerate = (2R)-3-phosphoglycerate. The protein operates within carbohydrate degradation; glycolysis; pyruvate from D-glyceraldehyde 3-phosphate: step 3/5. Catalyzes the interconversion of 2-phosphoglycerate and 3-phosphoglycerate. The chain is 2,3-bisphosphoglycerate-dependent phosphoglycerate mutase from Buchnera aphidicola subsp. Acyrthosiphon pisum (strain 5A).